The primary structure comprises 630 residues: tRNA uridine 5-carboxymethylaminomethyl modification enzyme MnmG (630 aa).

FAD is bound at residue 13–18 (GGGHAG). 273-287 (GPRYCPSIEDKVMRF) contacts NAD(+).

This sequence belongs to the MnmG family. As to quaternary structure, homodimer. Heterotetramer of two MnmE and two MnmG subunits. FAD is required as a cofactor.

The protein localises to the cytoplasm. NAD-binding protein involved in the addition of a carboxymethylaminomethyl (cmnm) group at the wobble position (U34) of certain tRNAs, forming tRNA-cmnm(5)s(2)U34. The sequence is that of tRNA uridine 5-carboxymethylaminomethyl modification enzyme MnmG from Actinobacillus pleuropneumoniae serotype 7 (strain AP76).